Here is a 690-residue protein sequence, read N- to C-terminus: Guanylate cyclase soluble subunit alpha-1 (690 aa).

Phosphoserine is present on Ser-266. Positions 480–607 (TMLFSDIVGF…NNVTLANKFE (128 aa)) constitute a Guanylate cyclase domain.

This sequence belongs to the adenylyl cyclase class-4/guanylyl cyclase family. The active enzyme is formed by a heterodimer of an alpha and a beta subunit. Heterodimer with GUCY1B1. Requires Mg(2+) as cofactor. Mn(2+) is required as a cofactor.

The protein localises to the cytoplasm. It carries out the reaction GTP = 3',5'-cyclic GMP + diphosphate. Activated by nitric oxide in the presence of magnesium or manganese ions. This chain is Guanylate cyclase soluble subunit alpha-1 (Gucy1a1), found in Rattus norvegicus (Rat).